We begin with the raw amino-acid sequence, 429 residues long: MKRVLAIILGGGAGTRLYPLTKLRAKPAVPLAGKYRLIDIPVSNCINSEITKIYVLTQFNSASLNRHLSRTYNFTGFNDEFVEVLAAQQTAENPSWFQGTADAVRQYLWLMEEWDVDEYLILSGDHLYRMDYREYIQRHRETKADITLSVVPIDEKRASSFGLMKIDDNARVVDFSEKPKGEALRQMQVDTSILGLSPDQARKNPYIASMGIYIFNREVLGKLLRQNPEQTDFGKEIIPGAKTDYNLQAYLYKGYWEDIGTIEAFYESNLALTQQPQPPFSFYDEKAPIYTRPRYLPPTKVLNCTITESMISEGCILKDCRIHHSVLGIRSRVESDCTIEDSMLMGADYYESSTKRKAVLEAGKVPQGIGAGTTIRRAIIDKNARIGRNVLIINKDRIEEAEREDEGFLIRSGIVVVIKNATIPDGTVI.

Alpha-D-glucose 1-phosphate is bound by residues Gly162, 177–178 (EK), and Ser209.

The protein belongs to the bacterial/plant glucose-1-phosphate adenylyltransferase family. In terms of assembly, homotetramer.

It carries out the reaction alpha-D-glucose 1-phosphate + ATP + H(+) = ADP-alpha-D-glucose + diphosphate. It participates in glycan biosynthesis; glycogen biosynthesis. In terms of biological role, involved in the biosynthesis of ADP-glucose, a building block required for the elongation reactions to produce glycogen. Catalyzes the reaction between ATP and alpha-D-glucose 1-phosphate (G1P) to produce pyrophosphate and ADP-Glc. The chain is Glucose-1-phosphate adenylyltransferase from Gloeothece citriformis (strain PCC 7424) (Cyanothece sp. (strain PCC 7424)).